The following is a 776-amino-acid chain: Endonuclease MutS2 (776 aa).

330–337 is an ATP binding site; it reads GPNTGGKT. The Smr domain occupies 701–776; sequence LDLRGMRYEE…GSGATIAILK (76 aa).

The protein belongs to the DNA mismatch repair MutS family. MutS2 subfamily. In terms of assembly, homodimer. Binds to stalled ribosomes, contacting rRNA.

Functionally, endonuclease that is involved in the suppression of homologous recombination and thus may have a key role in the control of bacterial genetic diversity. In terms of biological role, acts as a ribosome collision sensor, splitting the ribosome into its 2 subunits. Detects stalled/collided 70S ribosomes which it binds and splits by an ATP-hydrolysis driven conformational change. Acts upstream of the ribosome quality control system (RQC), a ribosome-associated complex that mediates the extraction of incompletely synthesized nascent chains from stalled ribosomes and their subsequent degradation. Probably generates substrates for RQC. The polypeptide is Endonuclease MutS2 (Lactococcus lactis subsp. cremoris (strain SK11)).